Consider the following 597-residue polypeptide: Chaperonin 60 subunit beta 3, chloroplastic (597 aa).

The interval 1–20 is disordered; it reads MASTFSATSSMGSSLAPPSN. A chloroplast-targeting transit peptide spans 1–29; sequence MASTFSATSSMGSSLAPPSNRLSSFVSIS. Phosphoserine is present on residues S97 and S474. Residues 387–489 are a coiled coil; the sequence is STEEVVKKRV…KETLANDEEK (103 aa).

The protein belongs to the chaperonin (HSP60) family. As to quaternary structure, part of the Cpn60 complex composed of 7 alpha and 7 beta subunits. Can also form a complex composed of 14 beta subunits only. Both complexes show ATPase activity. The Cpn60 complex interacts with the Cpn10 complex.

It is found in the plastid. The protein localises to the chloroplast. In terms of biological role, involved in protein assisted folding. The protein is Chaperonin 60 subunit beta 3, chloroplastic (CPN60B3) of Arabidopsis thaliana (Mouse-ear cress).